Here is a 282-residue protein sequence, read N- to C-terminus: Bis(5'-nucleosyl)-tetraphosphatase, symmetrical (282 aa).

It belongs to the Ap4A hydrolase family.

The enzyme catalyses P(1),P(4)-bis(5'-adenosyl) tetraphosphate + H2O = 2 ADP + 2 H(+). In terms of biological role, hydrolyzes diadenosine 5',5'''-P1,P4-tetraphosphate to yield ADP. The chain is Bis(5'-nucleosyl)-tetraphosphatase, symmetrical from Burkholderia pseudomallei (strain 668).